The following is a 40-amino-acid chain: Natriuretic peptide PtNP-a (40 aa).

Cys9 and Cys25 form a disulfide bridge. Residues 17-34 (ISNTSGMGCRNPIQNRPK) are compositionally biased toward polar residues. The tract at residues 17-40 (ISNTSGMGCRNPIQNRPKSTPGGS) is disordered.

The protein belongs to the natriuretic peptide family. As to expression, expressed by the venom gland.

Its subcellular location is the secreted. Functionally, snake venom natriuretic peptide that targets NPR1 and possibly NPR2. Exhibits hypotensive and vasodepressor activities. Recombinant PtNP-a demonstrates a dose-dependent stimulation of cGMP production via the natriuretic peptide receptor 1 (NPR1) (EC(50)=563 nM) in Madine Darby Canine Kidney (MDCK) cells. It also inhibits the angiotensin converting enzyme (ACE). This Pseudonaja textilis (Eastern brown snake) protein is Natriuretic peptide PtNP-a.